Here is a 111-residue protein sequence, read N- to C-terminus: 4'-hydroxy-3'-methoxypropiophenone carrier protein ppsC (111 aa).

Residues M1 to G21 form a disordered region.

It functions in the pathway secondary metabolite biosynthesis. Its function is as follows. 4'-hydroxy-3'-methoxypropiophenone carrier protein; part of the gene cluster that mediates the biosynthesis of 2,4'-dihydroxy-3'-methoxypropiophenone. The first step of the pathway is the conversion of acetate into acetyl-CoA by the acyl-CoA ligase ppsA. Acetyl-CoA is then used as a starter unit by the polyketide synthase ppsB and condensed with 4 malonyl-CoA unit to produce the pentaketide backbone. During polyketide extension, the polykedite chain is probably reduced and dehydrated by the KR and PT domains, respectively. O-methylation seems to be catalyzed by an unknown methyltransferase rather than by the CMeT domain of ppsB. Two hydroxylations and one further decarboxylation step catalyzed by yet unknown enzymes are then required to yield 4'-hydroxy-3'-methoxypropiophenone. PpsC functions as a carrier protein to transport 4'-hydroxy-3'-methoxypropiophenone to a specific cell compartment in which 4'-hydroxy-3'-methoxypropiophenone is hydroxylated to 2,4'-dihydroxy-3'-methoxypropiophenone by a still to be identified enzyme. The protein is 4'-hydroxy-3'-methoxypropiophenone carrier protein ppsC of Aspergillus oryzae (strain ATCC 42149 / RIB 40) (Yellow koji mold).